The primary structure comprises 999 residues: Sarcoplasmic/endoplasmic reticulum calcium ATPase 3 (999 aa).

At 1-48 (MEAAHSVPVQDVLSRFGVAESCGLSPEQVRRNREKYGPNELPAEERKS) the chain is on the cytoplasmic side. The chain crosses the membrane as a helical span at residues 49–69 (LWELVLEQFEDLLVRILLMAA). Residues 70–89 (FLSFILAWFEEGEESTTAFV) lie on the Lumenal side of the membrane. A helical transmembrane segment spans residues 90-110 (EPIVIIMILIANAVVGVWQER). Residues 111-253 (NAESAIEALK…PEKTPLQQKL (143 aa)) lie on the Cytoplasmic side of the membrane. The chain crosses the membrane as a helical span at residues 254 to 273 (DEFSQQLSKVIFLVCIAVWV). Residues 274 to 295 (INISHFSDPVHGGSWFRGAIYY) lie on the Lumenal side of the membrane. The helical transmembrane segment at 296 to 313 (FKTSVALAVAAIPEGLPA) threads the bilayer. The Ca(2+) site is built by Val-304, Ala-305, Ile-307, and Glu-309. Residues 314–757 (VITTCLALGT…EEGRAIYNNM (444 aa)) lie on the Cytoplasmic side of the membrane. Asp-351 serves as the catalytic 4-aspartylphosphate intermediate. Residues Asp-351 and Thr-353 each contribute to the Mg(2+) site. Residue Thr-353 coordinates ATP. The tract at residues 370-400 (EKVEGTQCSLHEFSITGSTYAPEGQILKDEK) is interaction with phospholamban 1. ATP-binding residues include Glu-442, Arg-489, Lys-515, Arg-560, Thr-625, Gly-626, Asp-627, Arg-678, and Lys-684. Asp-703 is a Mg(2+) binding site. Residue Asn-706 coordinates ATP. The chain crosses the membrane as a helical span at residues 758 to 777 (KQFIRYLISSNVGEVVCIFL). Asn-768 and Glu-771 together coordinate Ca(2+). Residues 778-787 (TAILGLPEAL) lie on the Lumenal side of the membrane. The helical transmembrane segment at 788 to 808 (IPVQLLWVNLVTDGLPATALG) threads the bilayer. An interaction with phospholamban 2 region spans residues 788-808 (IPVQLLWVNLVTDGLPATALG). Ca(2+) is bound by residues Asn-796, Thr-799, and Asp-800. Residues 809-828 (FNPPDLDIMDKLPRNPKEPL) are Cytoplasmic-facing. A helical transmembrane segment spans residues 829 to 851 (ISGWLFFRYLAIGVYVGLATVGA). Topologically, residues 852-897 (ATWWFLYDAEGPQVSFHQLRNFMRCTEDNPIFEGVNCEIFESRYPT) are lumenal. A helical membrane pass occupies residues 898–917 (TMALSVLVTIEMCNALNSVS). Residue Glu-908 coordinates Ca(2+). Over 918–930 (ENQSLLRMPPWLN) the chain is Cytoplasmic. A helical transmembrane segment spans residues 931–949 (IWLLGAIVMSMALHFFILY). The Lumenal segment spans residues 950–964 (VKPMPLIFQVTPLSW). A helical membrane pass occupies residues 965 to 985 (PQWVVVLKISLPVILLDEGLK). The Cytoplasmic portion of the chain corresponds to 986–999 (YLSRNHLEGEEDKK).

The protein belongs to the cation transport ATPase (P-type) (TC 3.A.3) family. Type IIA subfamily. As to quaternary structure, interacts with sarcolipin (SLN). Interacts with phospholamban (PLN). Interacts with myoregulin (MRLN). Interacts with DWORF. Mg(2+) is required as a cofactor. Found in spleen, lung, intestine and brain.

The protein resides in the endoplasmic reticulum membrane. It is found in the sarcoplasmic reticulum membrane. The enzyme catalyses Ca(2+)(in) + ATP + H2O = Ca(2+)(out) + ADP + phosphate + H(+). Inhibited by sarcolipin (SLN), phospholamban (PLN) and myoregulin (MRLN). Enhanced by DWORF; DWORF increases activity by displacing sarcolipin (SLN), phospholamban (PLN) and myoregulin (MRLN). Its function is as follows. This magnesium-dependent enzyme catalyzes the hydrolysis of ATP coupled with the transport of calcium. Transports calcium ions from the cytosol into the sarcoplasmic/endoplasmic reticulum lumen. Contributes to calcium sequestration involved in muscular excitation/contraction. This chain is Sarcoplasmic/endoplasmic reticulum calcium ATPase 3 (ATP2A3), found in Gallus gallus (Chicken).